A 338-amino-acid chain; its full sequence is Aspartate carbamoyltransferase catalytic subunit (338 aa).

Arg59 and Thr60 together coordinate carbamoyl phosphate. Position 87 (Lys87) interacts with L-aspartate. Carbamoyl phosphate-binding residues include Arg109, His142, and Gln145. L-aspartate-binding residues include Arg182 and Arg248. Residues Gly289 and Pro290 each contribute to the carbamoyl phosphate site.

This sequence belongs to the aspartate/ornithine carbamoyltransferase superfamily. ATCase family. As to quaternary structure, heterododecamer (2C3:3R2) of six catalytic PyrB chains organized as two trimers (C3), and six regulatory PyrI chains organized as three dimers (R2).

It catalyses the reaction carbamoyl phosphate + L-aspartate = N-carbamoyl-L-aspartate + phosphate + H(+). It functions in the pathway pyrimidine metabolism; UMP biosynthesis via de novo pathway; (S)-dihydroorotate from bicarbonate: step 2/3. Its function is as follows. Catalyzes the condensation of carbamoyl phosphate and aspartate to form carbamoyl aspartate and inorganic phosphate, the committed step in the de novo pyrimidine nucleotide biosynthesis pathway. This Synechococcus elongatus (strain ATCC 33912 / PCC 7942 / FACHB-805) (Anacystis nidulans R2) protein is Aspartate carbamoyltransferase catalytic subunit.